A 444-amino-acid chain; its full sequence is Ribosome biogenesis protein YTM1 (444 aa).

The ubiquitin-like (UBL) domain stretch occupies residues 8–89; it reads VKLRFFTREE…ETFLNVEYTR (82 aa). 7 WD repeats span residues 99–138, 140–178, 194–231, 269–309, 311–350, 357–397, and 408–444; these read SFDN…EKQY, GHSG…LKSI, GHKA…MTVI, SHSA…CVDT, TTSY…SSKI, GHKN…AMYT, and GVND…IFSN. Positions 99-444 are sufficient for interaction with ERB1 and association with 66S pre-ribosomes; sequence SFDNEDWVSS…INKGDNIFSN (346 aa).

This sequence belongs to the WD repeat WDR12/YTM1 family. In terms of assembly, component of the NOP7 complex, composed of ERB1, NOP7 and YTM1. The complex is held together by ERB1, which interacts with NOP7 via its N-terminal domain and with YTM1 via a high-affinity interaction between the seven-bladed beta-propeller domains of the 2 proteins. The NOP7 complex associates with the 66S pre-ribosome. Interacts (via UBL domain) with MDN1 (via VWFA/MIDAS domain).

It localises to the nucleus. It is found in the nucleolus. Its subcellular location is the nucleoplasm. In terms of biological role, component of the NOP7 complex, which is required for maturation of the 25S and 5.8S ribosomal RNAs and formation of the 60S ribosome. The chain is Ribosome biogenesis protein YTM1 from Kluyveromyces lactis (strain ATCC 8585 / CBS 2359 / DSM 70799 / NBRC 1267 / NRRL Y-1140 / WM37) (Yeast).